Reading from the N-terminus, the 758-residue chain is Relaxin receptor 1 (758 aa).

Residues 1 to 409 lie on the Extracellular side of the membrane; sequence MTSGPFFFCI…ENLLASIIQR (409 aa). The region spanning 26–63 is the LDL-receptor class A domain; that stretch reads SCPLGSFPCGNMSRCLPQLLHCNGVDDCGNRADEDHCG. 3 disulfides stabilise this stretch: Cys-27–Cys-40, Cys-34–Cys-53, and Cys-47–Cys-62. Asn-36 carries N-linked (GlcNAc...) asparagine glycosylation. Residues Leu-45, Asn-48, Val-50, Asp-52, Asp-58, and Glu-59 each contribute to the Ca(2+) site. The N-linked (GlcNAc...) asparagine glycan is linked to Asn-127. 10 LRR repeats span residues 127 to 148, 151 to 172, 175 to 196, 199 to 220, 223 to 244, 248 to 269, 272 to 293, 296 to 317, 320 to 341, and 344 to 365; these read NVTV…GFRK, ELQK…AFRG, SLTK…VFED, RLEW…TFYG, SLIL…PLCQ, RLHW…TFIS, NLTV…AFTH, KLDE…IFKD, ELSQ…QFDC, and KLKS…MFRP. Residues Asn-264 and Asn-272 are each glycosylated (N-linked (GlcNAc...) asparagine). Residue Asn-325 is glycosylated (N-linked (GlcNAc...) asparagine). Residue Asn-368 is glycosylated (N-linked (GlcNAc...) asparagine). The chain crosses the membrane as a helical span at residues 410–430; that stretch reads VFVWVVSAITCFGNIFVICMR. At 431–443 the chain is on the cytoplasmic side; the sequence is PYIRSENKLHAMS. Residues 444-464 traverse the membrane as a helical segment; the sequence is IISLCCADCLMGVYLFVIGAF. The Extracellular portion of the chain corresponds to 465 to 486; the sequence is DLKFRGEYNKHAQPWMESVHCQ. Cys-485 and Cys-563 are disulfide-bonded. A helical transmembrane segment spans residues 487 to 507; that stretch reads FMGSLAILSTEVSVLLLTFLT. Residues 508 to 527 are Cytoplasmic-facing; it reads LEKYICIVYPFRCLRPRKCR. Residues 528–548 traverse the membrane as a helical segment; the sequence is TITVLIFIWIIGFIVAFAPLG. Residues 549 to 577 lie on the Extracellular side of the membrane; it reads NKEFFKNYYGTNGVCFPLHSEDTGSTGAQ. A helical membrane pass occupies residues 578–598; it reads IYSVVIFLGINLVAFIIIVFS. Over 599-629 the chain is Cytoplasmic; sequence YGSMFYSVHQSSVTVTEIQKQVKKEVVLAKR. Residues 630–650 form a helical membrane-spanning segment; that stretch reads FFFIVFTDALCWIPIFILKFL. Position 651 (Ser-651) is a topological domain, extracellular. The helical transmembrane segment at 652–672 threads the bilayer; the sequence is LLQVEIPDSITSWVVIFILPI. Topologically, residues 673 to 758 are cytoplasmic; the sequence is NSALNPIIYT…SQSSRLNSYS (86 aa).

This sequence belongs to the G-protein coupled receptor 1 family. Interacts with C1QTNF8.

Its subcellular location is the cell membrane. Functionally, receptor for relaxins. The activity of this receptor is mediated by G proteins leading to stimulation of adenylate cyclase and an increase of cAMP. Binding of the ligand may also activate a tyrosine kinase pathway that inhibits the activity of a phosphodiesterase that degrades cAMP. The sequence is that of Relaxin receptor 1 (Rxfp1) from Mus musculus (Mouse).